Reading from the N-terminus, the 293-residue chain is Pyridoxal 5'-phosphate synthase subunit PdxS (293 aa).

D23 contacts D-ribose 5-phosphate. K80 acts as the Schiff-base intermediate with D-ribose 5-phosphate in catalysis. D-ribose 5-phosphate is bound at residue G152. R164 contacts D-glyceraldehyde 3-phosphate. D-ribose 5-phosphate contacts are provided by residues G213 and 234 to 235 (GS).

Belongs to the PdxS/SNZ family. As to quaternary structure, in the presence of PdxT, forms a dodecamer of heterodimers.

The catalysed reaction is aldehydo-D-ribose 5-phosphate + D-glyceraldehyde 3-phosphate + L-glutamine = pyridoxal 5'-phosphate + L-glutamate + phosphate + 3 H2O + H(+). The protein operates within cofactor biosynthesis; pyridoxal 5'-phosphate biosynthesis. In terms of biological role, catalyzes the formation of pyridoxal 5'-phosphate from ribose 5-phosphate (RBP), glyceraldehyde 3-phosphate (G3P) and ammonia. The ammonia is provided by the PdxT subunit. Can also use ribulose 5-phosphate and dihydroxyacetone phosphate as substrates, resulting from enzyme-catalyzed isomerization of RBP and G3P, respectively. The chain is Pyridoxal 5'-phosphate synthase subunit PdxS from Niallia circulans (Bacillus circulans).